A 251-amino-acid polypeptide reads, in one-letter code: Flap endonuclease Xni (251 aa).

A Mg(2+)-binding site is contributed by D104. Positions 160 to 249 constitute a 5'-3' exonuclease domain; sequence VQPQQLPDYW…IDGNLQQLRL (90 aa). K(+)-binding residues include L171, A172, P180, V182, and I185. Residues 184-189 are interaction with DNA; sequence GIGPKS.

This sequence belongs to the Xni family. Requires Mg(2+) as cofactor. K(+) serves as cofactor.

In terms of biological role, has flap endonuclease activity. During DNA replication, flap endonucleases cleave the 5'-overhanging flap structure that is generated by displacement synthesis when DNA polymerase encounters the 5'-end of a downstream Okazaki fragment. This chain is Flap endonuclease Xni, found in Escherichia coli O7:K1 (strain IAI39 / ExPEC).